Reading from the N-terminus, the 400-residue chain is Delta(12) fatty acid desaturase (400 aa).

A helical membrane pass occupies residues 91 to 111 (LAWPAYWIMQGIVCTGIWVLA). The Histidine box-1 signature appears at 112 to 116 (HECGH). Residues 148–152 (HSKHH) carry the Histidine box-2 motif. A run of 3 helical transmembrane segments spans residues 199–219 (IVTL…YLIM), 245–265 (FFDI…LIYA), and 277–297 (YYII…FLQH). The Histidine box-3 signature appears at 339 to 343 (HVAHH).

Belongs to the fatty acid desaturase type 1 family.

Its subcellular location is the membrane. The enzyme catalyses (9Z)-octadecenoyl-CoA + 2 Fe(II)-[cytochrome b5] + O2 + 2 H(+) = (9Z,12Z)-octadecadienoyl-CoA + 2 Fe(III)-[cytochrome b5] + 2 H2O. It carries out the reaction (9Z)-hexadecenoyl-CoA + 2 Fe(II)-[cytochrome b5] + O2 + 2 H(+) = (9Z,12Z)-hexadecadienoyl-CoA + 2 Fe(III)-[cytochrome b5] + 2 H2O. Its pathway is lipid metabolism; polyunsaturated fatty acid biosynthesis. Catalyzes the desaturation of oleic acid (Delta(9)-18:1) to linoleic acid (Delta(9), Delta(12)-18:2). The protein is Delta(12) fatty acid desaturase of Mortierella isabellina (Filamentous fungus).